Reading from the N-terminus, the 150-residue chain is Ribosome maturation factor RimP (150 aa).

It belongs to the RimP family.

Its subcellular location is the cytoplasm. Its function is as follows. Required for maturation of 30S ribosomal subunits. In Escherichia coli O9:H4 (strain HS), this protein is Ribosome maturation factor RimP.